The chain runs to 299 residues: Dermonecrotic toxin LiSicTox-alphaIVA1 (299 aa).

Positions 1–18 are cleaved as a signal peptide; it reads MLFPTALIFGCWALVIEG. Residue His-30 is part of the active site. 2 residues coordinate Mg(2+): Glu-50 and Asp-52. Catalysis depends on His-66, which acts as the Nucleophile. Intrachain disulfides connect Cys-70/Cys-76 and Cys-72/Cys-217. Asp-110 contacts Mg(2+).

This sequence belongs to the arthropod phospholipase D family. Class II subfamily. Class IIa sub-subfamily. It depends on Mg(2+) as a cofactor. Expressed by the venom gland.

The protein localises to the secreted. It catalyses the reaction an N-(acyl)-sphingosylphosphocholine = an N-(acyl)-sphingosyl-1,3-cyclic phosphate + choline. The enzyme catalyses an N-(acyl)-sphingosylphosphoethanolamine = an N-(acyl)-sphingosyl-1,3-cyclic phosphate + ethanolamine. The catalysed reaction is a 1-acyl-sn-glycero-3-phosphocholine = a 1-acyl-sn-glycero-2,3-cyclic phosphate + choline. It carries out the reaction a 1-acyl-sn-glycero-3-phosphoethanolamine = a 1-acyl-sn-glycero-2,3-cyclic phosphate + ethanolamine. In terms of biological role, dermonecrotic toxins cleave the phosphodiester linkage between the phosphate and headgroup of certain phospholipids (sphingolipid and lysolipid substrates), forming an alcohol (often choline) and a cyclic phosphate. This toxin acts on sphingomyelin (SM) with high activity. It may also act on ceramide phosphoethanolamine (CPE), lysophosphatidylcholine (LPC) and lysophosphatidylethanolamine (LPE), but not on lysophosphatidylserine (LPS), and lysophosphatidylglycerol (LPG). It acts by transphosphatidylation, releasing exclusively cyclic phosphate products as second products. Has hemolytic activity in human erythrocytes in a dose-dependent manner. In vivo, this toxin induces dermonecrosis, edema, hemorrhage, massive inflammatory response, as well as vascular permeability. In addition, thrombus formation has also been detected in dermal blood vessels. It also induces platelet aggregation. It is noteworthy that a Glu-248 replaces the Asp present in paralogs, without decrease in catalytic and hemolytic activities. This chain is Dermonecrotic toxin LiSicTox-alphaIVA1, found in Loxosceles intermedia (Brown spider).